A 427-amino-acid polypeptide reads, in one-letter code: ATP-dependent RNA helicase DDX39A (427 aa).

Residues 1–19 are compositionally biased toward acidic residues; sequence MAEQDVENELLDYDEDEEP. The segment at 1–35 is disordered; sequence MAEQDVENELLDYDEDEEPQVPQESTPAPPKKDVK. Position 2 is an N-acetylalanine (Ala-2). A Glycyl lysine isopeptide (Lys-Gly) (interchain with G-Cter in SUMO2) cross-link involves residue Lys-31. Lys-35 carries the N6-acetyllysine; alternate modification. Residue Lys-35 forms a Glycyl lysine isopeptide (Lys-Gly) (interchain with G-Cter in SUMO2); alternate linkage. At Ser-37 the chain carries Phosphoserine. The Q motif signature appears at 44–72; the sequence is SGFRDFLLKPELLRAIVDCGFEHPSEVQH. A Helicase ATP-binding domain is found at 75-248; the sequence is IPQAILGMDV…RKFMQDPMEV (174 aa). ATP is bound at residue 88-95; sequence AKSGMGKT. Residues Lys-154 and Lys-162 each participate in a glycyl lysine isopeptide (Lys-Gly) (interchain with G-Cter in SUMO2) cross-link. Thr-171 bears the Phosphothreonine mark. Positions 195–198 match the DECD box motif; that stretch reads DECD. Residues Lys-240 and Lys-255 each participate in a glycyl lysine isopeptide (Lys-Gly) (interchain with G-Cter in SUMO2) cross-link. Residues 260 to 421 form the Helicase C-terminal domain; the sequence is GLQQYYVKLK…ELPEEIDIST (162 aa). Ser-426 carries the post-translational modification Phosphoserine.

It belongs to the DEAD box helicase family. DECD subfamily. In terms of assembly, binds ALYREF/THOC4 and DDX39B/BAT1. Interacts with the apo-AREX complex component SARNP. Interacts with MX1. Interacts with MCM3AP isoform GANP. Interacts with ECD. Interacts with PHAX; this interaction stimulates PHAX RNA binding activity. In terms of processing, SUMOylated by RANBP2; SUMOylation modification affects its ability to bind RNA.

The protein resides in the nucleus. Its subcellular location is the cytoplasm. The catalysed reaction is ATP + H2O = ADP + phosphate + H(+). Its function is as follows. Helicase that plays an essential role in mRNA export and is involved in multiple steps in RNA metabolism including alternative splicing. Regulates nuclear mRNA export to the cytoplasm through association with ECD. Also involved in spliceosomal uridine-rich small nuclear RNA (U snRNA) export by stimulating the RNA binding of adapter PHAX. Plays a role in the negative regulation of type I IFN production by increasing the nuclear retention of antiviral transcripts and thus reducing their protein expression. Independently of the interferon pathway, plays an antiviral role against alphaviruses by binding to a 5' conserved sequence element in the viral genomic RNA. The polypeptide is ATP-dependent RNA helicase DDX39A (Ddx39a) (Rattus norvegicus (Rat)).